The primary structure comprises 318 residues: Acetyl-coenzyme A carboxylase carboxyl transferase subunit alpha (318 aa).

Residues 34–295 enclose the CoA carboxyltransferase C-terminal domain; that stretch reads DIEDQISQLR…KQAIKKDLSE (262 aa).

This sequence belongs to the AccA family. As to quaternary structure, acetyl-CoA carboxylase is a heterohexamer composed of biotin carboxyl carrier protein (AccB), biotin carboxylase (AccC) and two subunits each of ACCase subunit alpha (AccA) and ACCase subunit beta (AccD).

The protein localises to the cytoplasm. The catalysed reaction is N(6)-carboxybiotinyl-L-lysyl-[protein] + acetyl-CoA = N(6)-biotinyl-L-lysyl-[protein] + malonyl-CoA. It functions in the pathway lipid metabolism; malonyl-CoA biosynthesis; malonyl-CoA from acetyl-CoA: step 1/1. Its function is as follows. Component of the acetyl coenzyme A carboxylase (ACC) complex. First, biotin carboxylase catalyzes the carboxylation of biotin on its carrier protein (BCCP) and then the CO(2) group is transferred by the carboxyltransferase to acetyl-CoA to form malonyl-CoA. In Colwellia psychrerythraea (strain 34H / ATCC BAA-681) (Vibrio psychroerythus), this protein is Acetyl-coenzyme A carboxylase carboxyl transferase subunit alpha.